Reading from the N-terminus, the 274-residue chain is Nitrogenase iron protein (274 aa).

8–15 (GKGGIGKS) serves as a coordination point for ATP. Cys94 lines the [4Fe-4S] cluster pocket. Arg97 is modified (ADP-ribosylarginine; by dinitrogenase reductase ADP-ribosyltransferase). Position 131 (Cys131) interacts with [4Fe-4S] cluster.

This sequence belongs to the NifH/BchL/ChlL family. Homodimer. It depends on [4Fe-4S] cluster as a cofactor. The reversible ADP-ribosylation of Arg-97 inactivates the nitrogenase reductase and regulates nitrogenase activity.

The enzyme catalyses N2 + 8 reduced [2Fe-2S]-[ferredoxin] + 16 ATP + 16 H2O = H2 + 8 oxidized [2Fe-2S]-[ferredoxin] + 2 NH4(+) + 16 ADP + 16 phosphate + 6 H(+). Functionally, the key enzymatic reactions in nitrogen fixation are catalyzed by the nitrogenase complex, which has 2 components: the iron protein and the molybdenum-iron protein. This chain is Nitrogenase iron protein, found in Solidesulfovibrio magneticus (strain ATCC 700980 / DSM 13731 / RS-1) (Desulfovibrio magneticus).